The following is a 226-amino-acid chain: Phosphoglycolate phosphatase (226 aa).

The active-site Nucleophile is D9. Residues D9 and D11 each contribute to the Mg(2+) site. Position 150 (K150) interacts with substrate. D173 and D177 together coordinate Mg(2+).

This sequence belongs to the archaeal SPP-like hydrolase family. The cofactor is Mg(2+).

The catalysed reaction is 2-phosphoglycolate + H2O = glycolate + phosphate. Catalyzes the dephosphorylation of 2-phosphoglycolate. This Methanosarcina mazei (strain ATCC BAA-159 / DSM 3647 / Goe1 / Go1 / JCM 11833 / OCM 88) (Methanosarcina frisia) protein is Phosphoglycolate phosphatase.